The following is a 95-amino-acid chain: UPF0213 protein ESA_03545 (95 aa).

One can recognise a GIY-YIG domain in the interval 2–77 (EEWFLYLIRC…KQLTKRQKEQ (76 aa)).

It belongs to the UPF0213 family.

This is UPF0213 protein ESA_03545 from Cronobacter sakazakii (strain ATCC BAA-894) (Enterobacter sakazakii).